Here is a 214-residue protein sequence, read N- to C-terminus: Tungstate uptake system ATP-binding protein TupC (214 aa).

Positions 3–214 constitute an ABC transporter domain; it reads ITVSNLKKSY…GRVGEADGFF (212 aa). 35–42 contacts ATP; sequence GPNGAGKT.

The protein belongs to the ABC transporter superfamily. The complex is composed of two ATP-binding proteins (TupC), two transmembrane proteins (TupB) and a solute-binding protein (TupA).

The enzyme catalyses tungstate(in) + ATP + H2O = tungstate(out) + ADP + phosphate + H(+). Part of an ABC transporter complex involved in tungstate uptake. Probably responsible for energy coupling to the transport system. The polypeptide is Tungstate uptake system ATP-binding protein TupC (Peptoclostridium acidaminophilum (Eubacterium acidaminophilum)).